Consider the following 223-residue polypeptide: Mitochondrial cardiolipin hydrolase (223 aa).

Topologically, residues 1–6 (MGCASS) are mitochondrial intermembrane. The chain crosses the membrane as a helical span at residues 7-24 (KEEVALTPLSDVNAAKEV). The Cytoplasmic portion of the chain corresponds to 25 to 223 (ADLKAQVDQL…QFDKLWDMFK (199 aa)). The PLD phosphodiesterase domain occupies 164–191 (TAAHMHHKFAIIDGRLLLNGSFNWTRQA). Residues His-169, Lys-171, and Asp-176 contribute to the active site.

Belongs to the phospholipase D family. MitoPLD/Zucchini subfamily. Homodimer.

The protein resides in the mitochondrion outer membrane. Functionally, plays a critical role in PIWI-interacting RNA (piRNA) biogenesis. piRNAs provide essential protection against the activity of mobile genetic elements. piRNA-mediated transposon silencing is thus critical for maintaining genome stability. Backbone-non-specific, single strand-specific nuclease, cleaving either RNA or DNA substrates with similar affinity. Produces 5' phosphate and 3' hydroxyl termini, suggesting it could directly participate in the processing of primary piRNA transcripts. Has been proposed to act as a cardiolipin hydrolase to generate phosphatidic acid at mitochondrial surface. Although it cannot be excluded that it can act as a phospholipase in some circumstances, this activity could not be confirmed. The sequence is that of Mitochondrial cardiolipin hydrolase from Chlamydomonas reinhardtii (Chlamydomonas smithii).